The sequence spans 87 residues: DNA-directed RNA polymerase subunit omega (87 aa).

Belongs to the RNA polymerase subunit omega family. As to quaternary structure, the RNAP catalytic core consists of 2 alpha, 1 beta, 1 beta' and 1 omega subunit. When a sigma factor is associated with the core the holoenzyme is formed, which can initiate transcription.

The enzyme catalyses RNA(n) + a ribonucleoside 5'-triphosphate = RNA(n+1) + diphosphate. Promotes RNA polymerase assembly. Latches the N- and C-terminal regions of the beta' subunit thereby facilitating its interaction with the beta and alpha subunits. The polypeptide is DNA-directed RNA polymerase subunit omega (Ectopseudomonas mendocina (strain ymp) (Pseudomonas mendocina)).